Consider the following 380-residue polypeptide: Endonuclease III homolog 2 (380 aa).

A Nuclear localization signal motif is present at residues 8–12; that stretch reads RKRKH. An interaction with MLH1 region spans residues 15 to 40; that stretch reads VDIEEVEVRSKYFKKNERTVELVKEN. Residue K194 forms a Glycyl lysine isopeptide (Lys-Gly) (interchain with G-Cter in SUMO) linkage. Residues 228–252 enclose the HhH domain; sequence FDSDIPYDIEGILSLPGVGPKMGYL. K248 serves as the catalytic Nucleophile; for N-glycosylase activity. [4Fe-4S] cluster-binding residues include C319, C326, C329, and C335. Residues 376–380 carry the Nuclear localization signal motif; sequence RHKKK.

This sequence belongs to the Nth/MutY family. In terms of assembly, interacts with MLH1. It depends on [4Fe-4S] cluster as a cofactor. Monosumoylated.

It localises to the nucleus. The enzyme catalyses 2'-deoxyribonucleotide-(2'-deoxyribose 5'-phosphate)-2'-deoxyribonucleotide-DNA = a 3'-end 2'-deoxyribonucleotide-(2,3-dehydro-2,3-deoxyribose 5'-phosphate)-DNA + a 5'-end 5'-phospho-2'-deoxyribonucleoside-DNA + H(+). Functionally, bifunctional DNA N-glycosylase with associated apurinic/apyrimidinic (AP) lyase function that catalyzes the first step in base excision repair (BER), the primary repair pathway for the repair of oxidative DNA damage. The DNA N-glycosylase activity releases the damaged DNA base from DNA by cleaving the N-glycosidic bond, leaving an AP site. The AP-lyase activity cleaves the phosphodiester bond 3' to the AP site by a beta-elimination. Primarily recognizes and repairs oxidative base damage of pyrimidines, but also purine-derived lesions, alkylation damage as well as abasic sites. Can also repair the oxidation products of 8-oxoguanine. This is Endonuclease III homolog 2 (NTG2) from Saccharomyces cerevisiae (strain ATCC 204508 / S288c) (Baker's yeast).